The primary structure comprises 443 residues: Trigger factor (443 aa).

The 87-residue stretch at 168 to 254 (GDFVTIDFEG…IKNLKEKKLP (87 aa)) folds into the PPIase FKBP-type domain.

This sequence belongs to the FKBP-type PPIase family. Tig subfamily.

Its subcellular location is the cytoplasm. It catalyses the reaction [protein]-peptidylproline (omega=180) = [protein]-peptidylproline (omega=0). Its function is as follows. Involved in protein export. Acts as a chaperone by maintaining the newly synthesized protein in an open conformation. Functions as a peptidyl-prolyl cis-trans isomerase. In Syntrophus aciditrophicus (strain SB), this protein is Trigger factor.